Reading from the N-terminus, the 553-residue chain is MSERIFIGVAWPYANSQLHLGHVAGAYLPADIFARYHRTRGDEVLMVSGSDMHGTPITIRAEQEGITAAEVAERYHQRFMASWPKLGISWDFYTSTATANHARTAQEMFLSLYEKGYIYKNTVCQPFCSHCNRFLPDRYVEGTCPHCKYEGARGDQCDNCGKPLNAAELLNFRCKNCGNPPEFRETEHFFLKLSAFEEELIRWVETKTHWRTNVLNFTLRYLKEGLKDRAITRDLDWGVPLPLPGYEGKRLYVWFEAVIGYLSASKEWAASKGQPNAWQKYWGGDTKSYYFIGKDNIPFHTIIWPAMLMGKGGLNLPYDVPSNEYLTTESQKFSKSRNNAIWVDDVLSRYGVDTLRYLLSANMPESSDTDFSWREFVRRNNDELVATYGNLAQRVLTMVCRNYDNKVPEYGELDERSLTLIEKTAAMLCETDKALYNCNFREAIRLAMALAQEANRYLDEKAPWKEIKVDKAAAARSLYVAMVALSGLRVAFYPFLPESSGRLSTYLGFGSELEKESWILKMPVVGQELTPPEPLFKKLEDSVVEEETARMGL.

The short motif at 12 to 22 is the 'HIGH' region element; it reads PYANSQLHLGH. Residues Cys-144, Cys-147, Cys-157, and Cys-160 each contribute to the Zn(2+) site. Positions 332–336 match the 'KMSKS' region motif; the sequence is KFSKS. Lys-335 is an ATP binding site.

The protein belongs to the class-I aminoacyl-tRNA synthetase family. MetG type 1 subfamily. As to quaternary structure, monomer. It depends on Zn(2+) as a cofactor.

Its subcellular location is the cytoplasm. It catalyses the reaction tRNA(Met) + L-methionine + ATP = L-methionyl-tRNA(Met) + AMP + diphosphate. Its function is as follows. Is required not only for elongation of protein synthesis but also for the initiation of all mRNA translation through initiator tRNA(fMet) aminoacylation. The chain is Methionine--tRNA ligase from Dehalococcoides mccartyi (strain CBDB1).